Here is a 134-residue protein sequence, read N- to C-terminus: Small ribosomal subunit protein bS16 (134 aa).

The disordered stretch occupies residues 79–134; that stretch reads AGIAKRPSRNNPTKGEPGKKAQERLALAKQAEEEAAAKAAEAAAAAAAPAEEAASE. The span at 115 to 134 shows a compositional bias: low complexity; the sequence is AKAAEAAAAAAAPAEEAASE.

Belongs to the bacterial ribosomal protein bS16 family.

The sequence is that of Small ribosomal subunit protein bS16 from Brucella canis (strain ATCC 23365 / NCTC 10854 / RM-666).